The primary structure comprises 485 residues: UDP-N-acetylmuramate--L-alanine ligase (485 aa).

120–126 (GSHGKTT) is an ATP binding site.

Belongs to the MurCDEF family.

The protein localises to the cytoplasm. It catalyses the reaction UDP-N-acetyl-alpha-D-muramate + L-alanine + ATP = UDP-N-acetyl-alpha-D-muramoyl-L-alanine + ADP + phosphate + H(+). It participates in cell wall biogenesis; peptidoglycan biosynthesis. Cell wall formation. This is UDP-N-acetylmuramate--L-alanine ligase from Rickettsia africae (strain ESF-5).